A 180-amino-acid chain; its full sequence is Large ribosomal subunit protein uL6 (180 aa).

Belongs to the universal ribosomal protein uL6 family. As to quaternary structure, part of the 50S ribosomal subunit.

This protein binds to the 23S rRNA, and is important in its secondary structure. It is located near the subunit interface in the base of the L7/L12 stalk, and near the tRNA binding site of the peptidyltransferase center. The sequence is that of Large ribosomal subunit protein uL6 from Caldanaerobacter subterraneus subsp. tengcongensis (strain DSM 15242 / JCM 11007 / NBRC 100824 / MB4) (Thermoanaerobacter tengcongensis).